The following is a 278-amino-acid chain: Diaminopimelate epimerase (278 aa).

The substrate site is built by N13, Q46, and N65. The active-site Proton donor is C74. Substrate-binding positions include 75-76 (GN), N157, N190, and 208-209 (ER). Residue C217 is the Proton acceptor of the active site. Residue 218–219 (GT) participates in substrate binding.

Belongs to the diaminopimelate epimerase family. As to quaternary structure, homodimer.

It localises to the cytoplasm. It catalyses the reaction (2S,6S)-2,6-diaminopimelate = meso-2,6-diaminopimelate. It functions in the pathway amino-acid biosynthesis; L-lysine biosynthesis via DAP pathway; DL-2,6-diaminopimelate from LL-2,6-diaminopimelate: step 1/1. Catalyzes the stereoinversion of LL-2,6-diaminopimelate (L,L-DAP) to meso-diaminopimelate (meso-DAP), a precursor of L-lysine and an essential component of the bacterial peptidoglycan. The sequence is that of Diaminopimelate epimerase from Magnetococcus marinus (strain ATCC BAA-1437 / JCM 17883 / MC-1).